A 122-amino-acid polypeptide reads, in one-letter code: MIQVESMLEVADNSGARRVQCIKVLGGSHRRYASVGDIIKVTVKEAIPRGRVKKGDVMNAVVVRTKKGVRRPDGSVLRFDDNAAVLLNQNKAPIATRIFGPVTRELRGDQFMKIVSLAPEVL.

The protein belongs to the universal ribosomal protein uL14 family. Part of the 50S ribosomal subunit. Forms a cluster with proteins L3 and L19. In the 70S ribosome, L14 and L19 interact and together make contacts with the 16S rRNA in bridges B5 and B8.

Its function is as follows. Binds to 23S rRNA. Forms part of two intersubunit bridges in the 70S ribosome. The protein is Large ribosomal subunit protein uL14 of Psychrobacter arcticus (strain DSM 17307 / VKM B-2377 / 273-4).